Consider the following 193-residue polypeptide: NAD(P)H-quinone oxidoreductase subunit I (193 aa).

4Fe-4S ferredoxin-type domains are found at residues 55-84 (GRIH…VDWE) and 95-124 (KHYS…VTEE). Cys64, Cys67, Cys70, Cys74, Cys104, Cys107, Cys110, and Cys114 together coordinate [4Fe-4S] cluster.

The protein belongs to the complex I 23 kDa subunit family. NDH-1 is composed of at least 11 different subunits. [4Fe-4S] cluster serves as cofactor.

Its subcellular location is the cellular thylakoid membrane. The enzyme catalyses a plastoquinone + NADH + (n+1) H(+)(in) = a plastoquinol + NAD(+) + n H(+)(out). It carries out the reaction a plastoquinone + NADPH + (n+1) H(+)(in) = a plastoquinol + NADP(+) + n H(+)(out). NDH-1 shuttles electrons from an unknown electron donor, via FMN and iron-sulfur (Fe-S) centers, to quinones in the respiratory and/or the photosynthetic chain. The immediate electron acceptor for the enzyme in this species is believed to be plastoquinone. Couples the redox reaction to proton translocation, and thus conserves the redox energy in a proton gradient. The polypeptide is NAD(P)H-quinone oxidoreductase subunit I (Cyanothece sp. (strain PCC 7425 / ATCC 29141)).